A 717-amino-acid polypeptide reads, in one-letter code: Patatin-like phospholipase domain-containing protein PGUG_03164 (717 aa).

A helical membrane pass occupies residues 123–143 (WPFLIIITVWILLLCILYTVV). Residues 298 to 490 (LCLSGGACFA…RTDIPIDALK (193 aa)) form the PNPLA domain. Positions 329–333 (GTSGG) match the GXSXG motif. The active-site Nucleophile is Ser-331. Asp-477 functions as the Proton acceptor in the catalytic mechanism. Residues 680-717 (YDSESSAEETLSPGFSQGTHAVLTDESDDDSSDDEIDD) are disordered. The segment covering 704-717 (DESDDDSSDDEIDD) has biased composition (acidic residues).

This sequence belongs to the PLPL family.

Its subcellular location is the membrane. In terms of biological role, probable lipid hydrolase. The sequence is that of Patatin-like phospholipase domain-containing protein PGUG_03164 from Meyerozyma guilliermondii (strain ATCC 6260 / CBS 566 / DSM 6381 / JCM 1539 / NBRC 10279 / NRRL Y-324) (Yeast).